A 412-amino-acid polypeptide reads, in one-letter code: Serine hydroxymethyltransferase (412 aa).

Residues Leu-117 and 121–123 (GHL) contribute to the (6S)-5,6,7,8-tetrahydrofolate site. Lys-226 bears the N6-(pyridoxal phosphate)lysine mark. (6S)-5,6,7,8-tetrahydrofolate is bound by residues Glu-242 and 350–352 (SPF).

The protein belongs to the SHMT family. Homodimer. Pyridoxal 5'-phosphate is required as a cofactor.

The protein resides in the cytoplasm. It carries out the reaction (6R)-5,10-methylene-5,6,7,8-tetrahydrofolate + glycine + H2O = (6S)-5,6,7,8-tetrahydrofolate + L-serine. Its pathway is one-carbon metabolism; tetrahydrofolate interconversion. It participates in amino-acid biosynthesis; glycine biosynthesis; glycine from L-serine: step 1/1. In terms of biological role, catalyzes the reversible interconversion of serine and glycine with tetrahydrofolate (THF) serving as the one-carbon carrier. Appears to be specific for THF as the pteridine substrate, since the use of tetrahydromethanopterin (H4MPT) is much less efficient. Also exhibits THF-independent aldolase activity toward beta-hydroxyamino acids, producing glycine and aldehydes, via a retro-aldol mechanism. Thus, is able to catalyze the cleavage of L-allo-threonine and L-threo-beta-phenylserine. The sequence is that of Serine hydroxymethyltransferase from Methanosarcina barkeri (strain Fusaro / DSM 804).